Here is a 317-residue protein sequence, read N- to C-terminus: Probable cell division protein WhiA (317 aa).

The segment at residues 267–300 (SLKELGEMLHPPVGKSGVNHRLRRLELIARQVRG) is a DNA-binding region (H-T-H motif).

This sequence belongs to the WhiA family.

In terms of biological role, involved in cell division and chromosome segregation. The protein is Probable cell division protein WhiA of Moorella thermoacetica (strain ATCC 39073 / JCM 9320).